The following is a 639-amino-acid chain: tRNA-dihydrouridine(47) synthase [NAD(P)(+)]-like (639 aa).

Polar residues-rich tracts occupy residues 1 to 19 (MAES…TVTQ) and 54 to 65 (QTCSELSGNDAE). Disordered stretches follow at residues 1–20 (MAES…VTQK) and 52–122 (DKQT…HSQF). The segment covering 66–85 (NTVRAEDAAEPEAKRIKLDD) has biased composition (basic and acidic residues). Residues 103 to 119 (EKKRARGQNKSRPHMKH) show a composition bias toward basic residues. 2 consecutive C3H1-type zinc fingers follow at residues 122-152 (FEEN…HDVA) and 160-190 (EDIR…HLGD). Residues 300-302 (PLT) and Gln354 contribute to the FMN site. Residue Cys385 is the Proton donor of the active site. FMN contacts are provided by residues Lys424, His454, 486–488 (NGD), and 509–510 (AR).

Belongs to the Dus family. Dus3 subfamily. FMN serves as cofactor.

It carries out the reaction 5,6-dihydrouridine(47) in tRNA + NAD(+) = uridine(47) in tRNA + NADH + H(+). It catalyses the reaction 5,6-dihydrouridine(47) in tRNA + NADP(+) = uridine(47) in tRNA + NADPH + H(+). The catalysed reaction is a 5,6-dihydrouridine in mRNA + NAD(+) = a uridine in mRNA + NADH + H(+). The enzyme catalyses a 5,6-dihydrouridine in mRNA + NADP(+) = a uridine in mRNA + NADPH + H(+). In terms of biological role, catalyzes the synthesis of dihydrouridine, a modified base, in various RNAs, such as tRNAs, mRNAs and some long non-coding RNAs (lncRNAs). Mainly modifies the uridine in position 47 (U47) in the D-loop of most cytoplasmic tRNAs. Also able to mediate the formation of dihydrouridine in some mRNAs, thereby regulating their translation. The sequence is that of tRNA-dihydrouridine(47) synthase [NAD(P)(+)]-like (dus3l) from Xenopus tropicalis (Western clawed frog).